Consider the following 391-residue polypeptide: uncharacterized protein (391 aa).

Residues 247 to 387 (AVIVYATIYS…KIKEFGRKLA (141 aa)) enclose the Flavodoxin-like domain.

This is an uncharacterized protein from Methanocaldococcus jannaschii (strain ATCC 43067 / DSM 2661 / JAL-1 / JCM 10045 / NBRC 100440) (Methanococcus jannaschii).